The chain runs to 215 residues: Ribonuclease T (215 aa).

Residues 20–194 (VVIDVETAGF…YDTERTAVLF (175 aa)) enclose the Exonuclease domain. Mg(2+) contacts are provided by aspartate 23, glutamate 25, histidine 181, and aspartate 186. The active-site Proton donor/acceptor is the histidine 181.

The protein belongs to the RNase T family. As to quaternary structure, homodimer. Requires Mg(2+) as cofactor.

In terms of biological role, trims short 3' overhangs of a variety of RNA species, leaving a one or two nucleotide 3' overhang. Responsible for the end-turnover of tRNA: specifically removes the terminal AMP residue from uncharged tRNA (tRNA-C-C-A). Also appears to be involved in tRNA biosynthesis. The sequence is that of Ribonuclease T from Shigella boydii serotype 4 (strain Sb227).